Here is a 406-residue protein sequence, read N- to C-terminus: 4-hydroxy-3-methylbut-2-en-1-yl diphosphate synthase (ferredoxin) (406 aa).

Residues Cys314, Cys317, Cys348, and Glu355 each coordinate [4Fe-4S] cluster.

Belongs to the IspG family. [4Fe-4S] cluster is required as a cofactor.

It carries out the reaction (2E)-4-hydroxy-3-methylbut-2-enyl diphosphate + 2 oxidized [2Fe-2S]-[ferredoxin] + H2O = 2-C-methyl-D-erythritol 2,4-cyclic diphosphate + 2 reduced [2Fe-2S]-[ferredoxin] + H(+). The protein operates within isoprenoid biosynthesis; isopentenyl diphosphate biosynthesis via DXP pathway; isopentenyl diphosphate from 1-deoxy-D-xylulose 5-phosphate: step 5/6. Converts 2C-methyl-D-erythritol 2,4-cyclodiphosphate (ME-2,4cPP) into 1-hydroxy-2-methyl-2-(E)-butenyl 4-diphosphate. In Prochlorococcus marinus (strain MIT 9313), this protein is 4-hydroxy-3-methylbut-2-en-1-yl diphosphate synthase (ferredoxin).